Reading from the N-terminus, the 299-residue chain is Ethylmalonyl-CoA decarboxylase (299 aa).

This sequence belongs to the enoyl-CoA hydratase/isomerase family.

It localises to the cytoplasm. Its subcellular location is the cytosol. The enzyme catalyses (2S)-ethylmalonyl-CoA + H(+) = butanoyl-CoA + CO2. It catalyses the reaction (S)-methylmalonyl-CoA + H(+) = propanoyl-CoA + CO2. The catalysed reaction is (2R)-ethylmalonyl-CoA + H(+) = butanoyl-CoA + CO2. In terms of biological role, decarboxylates ethylmalonyl-CoA, a potentially toxic metabolite, to form butyryl-CoA, suggesting it might be involved in metabolite proofreading. Acts preferentially on (S)-ethylmalonyl-CoA but also has some activity on the (R)-isomer. Also has methylmalonyl-CoA decarboxylase activity at lower level. This is Ethylmalonyl-CoA decarboxylase (echdc1) from Xenopus laevis (African clawed frog).